The sequence spans 100 residues: Small ribosomal subunit protein uS14c (100 aa).

The protein belongs to the universal ribosomal protein uS14 family. In terms of assembly, part of the 30S ribosomal subunit.

The protein resides in the plastid. Its subcellular location is the chloroplast. Functionally, binds 16S rRNA, required for the assembly of 30S particles. The sequence is that of Small ribosomal subunit protein uS14c from Eucalyptus globulus subsp. globulus (Tasmanian blue gum).